We begin with the raw amino-acid sequence, 179 residues long: ATP synthase subunit delta (179 aa).

The protein belongs to the ATPase delta chain family. As to quaternary structure, F-type ATPases have 2 components, F(1) - the catalytic core - and F(0) - the membrane proton channel. F(1) has five subunits: alpha(3), beta(3), gamma(1), delta(1), epsilon(1). F(0) has three main subunits: a(1), b(2) and c(10-14). The alpha and beta chains form an alternating ring which encloses part of the gamma chain. F(1) is attached to F(0) by a central stalk formed by the gamma and epsilon chains, while a peripheral stalk is formed by the delta and b chains.

The protein resides in the cell membrane. F(1)F(0) ATP synthase produces ATP from ADP in the presence of a proton or sodium gradient. F-type ATPases consist of two structural domains, F(1) containing the extramembraneous catalytic core and F(0) containing the membrane proton channel, linked together by a central stalk and a peripheral stalk. During catalysis, ATP synthesis in the catalytic domain of F(1) is coupled via a rotary mechanism of the central stalk subunits to proton translocation. Functionally, this protein is part of the stalk that links CF(0) to CF(1). It either transmits conformational changes from CF(0) to CF(1) or is implicated in proton conduction. This is ATP synthase subunit delta from Clostridium botulinum (strain Okra / Type B1).